The following is a 649-amino-acid chain: tRNA-guanine(15) transglycosylase (649 aa).

Catalysis depends on Asp-88, which acts as the Nucleophile. Positions 123 and 194 each coordinate substrate. 3 residues coordinate Zn(2+): Cys-280, Cys-282, and Cys-285. The PUA domain maps to 572 to 647 (KYRVIVDKSV…VAVNIRGGLK (76 aa)).

Belongs to the archaeosine tRNA-ribosyltransferase family. It depends on Zn(2+) as a cofactor.

It carries out the reaction guanosine(15) in tRNA + 7-cyano-7-deazaguanine = 7-cyano-7-carbaguanosine(15) in tRNA + guanine. It participates in tRNA modification; archaeosine-tRNA biosynthesis. Exchanges the guanine residue with 7-cyano-7-deazaguanine (preQ0) at position 15 in the dihydrouridine loop (D-loop) of archaeal tRNAs. This is tRNA-guanine(15) transglycosylase from Methanococcus vannielii (strain ATCC 35089 / DSM 1224 / JCM 13029 / OCM 148 / SB).